We begin with the raw amino-acid sequence, 363 residues long: Pyrimidine monooxygenase RutA (363 aa).

FMN-binding positions include Ile-49 to Lys-50, Asn-115, Glu-124, Arg-140 to Tyr-141, and Ser-190.

It belongs to the NtaA/SnaA/DszA monooxygenase family. RutA subfamily.

The catalysed reaction is uracil + FMNH2 + NADH + O2 = (Z)-3-ureidoacrylate + FMN + NAD(+) + H2O + H(+). It catalyses the reaction thymine + FMNH2 + NADH + O2 = (Z)-2-methylureidoacrylate + FMN + NAD(+) + H2O + H(+). Functionally, catalyzes the pyrimidine ring opening between N-3 and C-4 by an unusual flavin hydroperoxide-catalyzed mechanism, adding oxygen atoms in the process to yield ureidoacrylate peracid, that immediately reacts with FMN forming ureidoacrylate and FMN-N(5)-oxide. The FMN-N(5)-oxide reacts spontaneously with NADH to produce FMN. Requires the flavin reductase RutF to regenerate FMN in vivo. This Escherichia coli (strain SMS-3-5 / SECEC) protein is Pyrimidine monooxygenase RutA.